The following is a 141-amino-acid chain: MAVERTLSIIKPDAVAKNIIGEIYSRFERNGLKIVASRMVRLSQADAEGFYAVHRERPFFNDLVKFMISGPVMVQVLEGEDAIRKNRDLMGATDPRKAEKGTIRADFAESIDANAVHGSDAPETAAVEIAYFFPELNIYTR.

Residues K11, F59, R87, T93, R104, and N114 each contribute to the ATP site. H117 acts as the Pros-phosphohistidine intermediate in catalysis.

The protein belongs to the NDK family. As to quaternary structure, homotetramer. Requires Mg(2+) as cofactor.

It is found in the cytoplasm. It carries out the reaction a 2'-deoxyribonucleoside 5'-diphosphate + ATP = a 2'-deoxyribonucleoside 5'-triphosphate + ADP. The catalysed reaction is a ribonucleoside 5'-diphosphate + ATP = a ribonucleoside 5'-triphosphate + ADP. Major role in the synthesis of nucleoside triphosphates other than ATP. The ATP gamma phosphate is transferred to the NDP beta phosphate via a ping-pong mechanism, using a phosphorylated active-site intermediate. This is Nucleoside diphosphate kinase from Nitrosospira multiformis (strain ATCC 25196 / NCIMB 11849 / C 71).